Reading from the N-terminus, the 111-residue chain is Cornifelin homolog B (111 aa).

Belongs to the cornifelin family.

The polypeptide is Cornifelin homolog B (cnfn-b) (Xenopus laevis (African clawed frog)).